We begin with the raw amino-acid sequence, 434 residues long: Prenyltransferase fogH (434 aa).

An L-tryptophan-binding site is contributed by glutamate 86. Positions 101, 248, 250, 252, and 346 each coordinate substrate.

It belongs to the tryptophan dimethylallyltransferase family.

It functions in the pathway secondary metabolite biosynthesis. Its function is as follows. Prenyltransferase; part of the gene cluster that mediates the biosynthesis of flavoglaucin and congeners (including aspergin, dihydroauroglaucin and auroglaucin), prenylated salicylaldehyde derivatives carrying a saturated or an unsaturated C-7 side chain. The PKS fogA releases the carboxylic acid (8E,10E,12E)-3,5,7-trihydroxytetradeca-8,10,12-trienoic acid as its product, as well as derivatives with one and two double bonds. FogA is indeed able to reduce the initial triketide, thus being at least partially responsible for the differently saturated heptyl side chains of flavoglaucin congeners. The oxidoreductases fogB, fogC and fogD modify the nascent polyketide in fogA-bound form and, together, fogA, fogB, fogC and fogD are necessary for the formation of the aromatic core and the cyclized PKS products are released as salicyl alcohols. In particular, fogB is responsible for oxidation of a hydroxyl group or reduction of remaining double bond(s) at the C-7 residue whereas fogD is probably involved in the reductive release of the modified PKS products. The cytochrome P450 monooxygenase fogE is then responsible for the hydroxylation at C-3 of the benzene ring. The fogE products are substrates of the prenyltransferase fogH and the prenylated benzyl alcohols are subsequently oxidized by the fogF to produce the final aryl aldehydes flavoglaucin and congeners. The short-chain dehydrogenase fogG does not seem to be involved in the biosynthesis of the prenylated salicylaldehyde derivatives. This Aspergillus ruber (strain CBS 135680) protein is Prenyltransferase fogH.